The primary structure comprises 184 residues: Jacalin-related lectin 2 (184 aa).

In terms of domain architecture, Jacalin-type lectin spans 4–163 (KIKIGPVGTD…LQNIGVYLQP (160 aa)).

The protein belongs to the jacalin lectin family.

The protein is Jacalin-related lectin 2 (JAL2) of Arabidopsis thaliana (Mouse-ear cress).